Here is a 276-residue protein sequence, read N- to C-terminus: Large ribosomal subunit protein uL2 (276 aa).

The disordered stretch occupies residues 221–276; sequence RGSAMNPNDHPHGGGEGRAPIGRKSPMTPWGKKARGVKTRDRKKASNALIIRRRKK. A compositionally biased stretch (basic residues) spans 252-276; the sequence is KKARGVKTRDRKKASNALIIRRRKK.

It belongs to the universal ribosomal protein uL2 family. As to quaternary structure, part of the 50S ribosomal subunit. Forms a bridge to the 30S subunit in the 70S ribosome.

In terms of biological role, one of the primary rRNA binding proteins. Required for association of the 30S and 50S subunits to form the 70S ribosome, for tRNA binding and peptide bond formation. It has been suggested to have peptidyltransferase activity; this is somewhat controversial. Makes several contacts with the 16S rRNA in the 70S ribosome. This chain is Large ribosomal subunit protein uL2, found in Aster yellows witches'-broom phytoplasma (strain AYWB).